The primary structure comprises 397 residues: Elongation factor Tu (397 aa).

The 197-residue stretch at 10–206 (KPHVNIGTIG…AVDENIPQPE (197 aa)) folds into the tr-type G domain. Residues 19–26 (GHVDHGKT) form a G1 region. Residue 19–26 (GHVDHGKT) coordinates GTP. Thr-26 serves as a coordination point for Mg(2+). Positions 62-66 (GITIS) are G2. The G3 stretch occupies residues 83-86 (DCPG). Residues 83-87 (DCPGH) and 138-141 (NKAD) contribute to the GTP site. The segment at 138 to 141 (NKAD) is G4. Positions 176–178 (SAL) are G5.

Belongs to the TRAFAC class translation factor GTPase superfamily. Classic translation factor GTPase family. EF-Tu/EF-1A subfamily. As to quaternary structure, monomer.

The protein localises to the cytoplasm. The enzyme catalyses GTP + H2O = GDP + phosphate + H(+). Its function is as follows. GTP hydrolase that promotes the GTP-dependent binding of aminoacyl-tRNA to the A-site of ribosomes during protein biosynthesis. The protein is Elongation factor Tu of Streptomyces cinnamoneus (Streptoverticillium cinnamoneum).